Here is a 420-residue protein sequence, read N- to C-terminus: Tyrosine--tRNA ligase (420 aa).

Tyr-33 is a binding site for L-tyrosine. A 'HIGH' region motif is present at residues 38-47 (PTADSLHIGH). L-tyrosine is bound by residues Tyr-168 and Gln-172. Positions 231–235 (KFGKT) match the 'KMSKS' region motif. An ATP-binding site is contributed by Lys-234. In terms of domain architecture, S4 RNA-binding spans 353–419 (MLLVDALIKV…GKKNYYLVKL (67 aa)).

It belongs to the class-I aminoacyl-tRNA synthetase family. TyrS type 1 subfamily. Homodimer.

It localises to the cytoplasm. It catalyses the reaction tRNA(Tyr) + L-tyrosine + ATP = L-tyrosyl-tRNA(Tyr) + AMP + diphosphate + H(+). Its function is as follows. Catalyzes the attachment of tyrosine to tRNA(Tyr) in a two-step reaction: tyrosine is first activated by ATP to form Tyr-AMP and then transferred to the acceptor end of tRNA(Tyr). The polypeptide is Tyrosine--tRNA ligase (Desulfitobacterium hafniense (strain Y51)).